The chain runs to 170 residues: uncharacterized protein (170 aa).

This is an uncharacterized protein from Archaeoglobus fulgidus (strain ATCC 49558 / DSM 4304 / JCM 9628 / NBRC 100126 / VC-16).